Here is a 209-residue protein sequence, read N- to C-terminus: Proteasome subunit beta (209 aa).

A propeptide spans 1 to 10 (MVEQSDTMKG) (removed in mature form; by autocatalysis). The Nucleophile role is filled by T11.

Belongs to the peptidase T1B family. As to quaternary structure, the 20S proteasome core is composed of 14 alpha and 14 beta subunits that assemble into four stacked heptameric rings, resulting in a barrel-shaped structure. The two inner rings, each composed of seven catalytic beta subunits, are sandwiched by two outer rings, each composed of seven alpha subunits. The catalytic chamber with the active sites is on the inside of the barrel. Has a gated structure, the ends of the cylinder being occluded by the N-termini of the alpha-subunits. Is capped at one or both ends by the proteasome regulatory ATPase, PAN.

It localises to the cytoplasm. The enzyme catalyses Cleavage of peptide bonds with very broad specificity.. Its activity is regulated as follows. The formation of the proteasomal ATPase PAN-20S proteasome complex, via the docking of the C-termini of PAN into the intersubunit pockets in the alpha-rings, triggers opening of the gate for substrate entry. Interconversion between the open-gate and close-gate conformations leads to a dynamic regulation of the 20S proteasome proteolysis activity. Component of the proteasome core, a large protease complex with broad specificity involved in protein degradation. This Methanospirillum hungatei JF-1 (strain ATCC 27890 / DSM 864 / NBRC 100397 / JF-1) protein is Proteasome subunit beta.